A 161-amino-acid chain; its full sequence is Nucleotide-binding protein Bxeno_A3642 (161 aa).

It belongs to the YajQ family.

Its function is as follows. Nucleotide-binding protein. This is Nucleotide-binding protein Bxeno_A3642 from Paraburkholderia xenovorans (strain LB400).